A 163-amino-acid polypeptide reads, in one-letter code: Putative 4-hydroxy-4-methyl-2-oxoglutarate aldolase (163 aa).

Substrate-binding positions include 76 to 79 and Arg98; that span reads GDML. Residue Asp99 coordinates a divalent metal cation.

The protein belongs to the class II aldolase/RraA-like family. Homotrimer. A divalent metal cation serves as cofactor.

It carries out the reaction 4-hydroxy-4-methyl-2-oxoglutarate = 2 pyruvate. It catalyses the reaction oxaloacetate + H(+) = pyruvate + CO2. In terms of biological role, catalyzes the aldol cleavage of 4-hydroxy-4-methyl-2-oxoglutarate (HMG) into 2 molecules of pyruvate. Also contains a secondary oxaloacetate (OAA) decarboxylase activity due to the common pyruvate enolate transition state formed following C-C bond cleavage in the retro-aldol and decarboxylation reactions. The sequence is that of Putative 4-hydroxy-4-methyl-2-oxoglutarate aldolase from Pseudomonas entomophila (strain L48).